Consider the following 192-residue polypeptide: N-terminal acetyltransferase A complex catalytic subunit NAA10 (192 aa).

Residues 2 to 152 form the N-acetyltransferase domain; the sequence is VCIRRATVDD…DAYDMRKNLK (151 aa).

The protein belongs to the acetyltransferase family. ARD1 subfamily. Part of the NatA complex. Interacts with NAA15. Expressed in leaves, roots, shoots and flowers.

The enzyme catalyses N-terminal glycyl-[protein] + acetyl-CoA = N-terminal N(alpha)-acetylglycyl-[protein] + CoA + H(+). The catalysed reaction is N-terminal L-alanyl-[protein] + acetyl-CoA = N-terminal N(alpha)-acetyl-L-alanyl-[protein] + CoA + H(+). It catalyses the reaction N-terminal L-seryl-[protein] + acetyl-CoA = N-terminal N(alpha)-acetyl-L-seryl-[protein] + CoA + H(+). It carries out the reaction N-terminal L-valyl-[protein] + acetyl-CoA = N-terminal N(alpha)-acetyl-L-valyl-[protein] + CoA + H(+). The enzyme catalyses N-terminal L-cysteinyl-[protein] + acetyl-CoA = N-terminal N(alpha)-acetyl-L-cysteinyl-[protein] + CoA + H(+). The catalysed reaction is N-terminal L-threonyl-[protein] + acetyl-CoA = N-terminal N(alpha)-acetyl-L-threonyl-[protein] + CoA + H(+). Catalytic subunit of the NatA N-alpha-acetyltransferase complex. Required for male gametocyte development, embryogenesis, suspensor development and the formation of the quiescent center (QC) in the root meristem. Involved in plant immunity through the regulation of SNC1 and RPM1 stability. The sequence is that of N-terminal acetyltransferase A complex catalytic subunit NAA10 from Arabidopsis thaliana (Mouse-ear cress).